Here is a 165-residue protein sequence, read N- to C-terminus: Protein YELLOW LEAF 1, choloroplastic (165 aa).

Residues 1–51 constitute a chloroplast transit peptide; the sequence is MPPLATMSSPGSLLLLTPAVYQGIGRNRGGQSQEGQSISSSRSLKTKLSVS. The interval 71 to 118 is disordered; the sequence is TQTARRKSFSGPTSPPSGSVKEKVRSPKLDDGGTGFPPFRFGGGGGGG. Positions 79–89 are enriched in low complexity; the sequence is FSGPTSPPSGS. Residues 90–101 show a composition bias toward basic and acidic residues; sequence VKEKVRSPKLDD.

As to quaternary structure, interacts with atpB. As to expression, highly expressed in leaves. Expressed in leaf sheaths. Expressed at low levels in stems.

It localises to the plastid. The protein localises to the chloroplast. Its function is as follows. Required for photosynthetic protein complex assembly in chloroplast thylakoid membranes during leaf development. Maintains the abundance of the core protein complex PsaA-PsaB of photosystem I (PSI) in the thylakoid membrane. May play a role in the efficient biogenesis of the chloroplast ATP synthase complex, possibly by interacting with the beta subunit atpB. The sequence is that of Protein YELLOW LEAF 1, choloroplastic from Oryza sativa subsp. japonica (Rice).